The primary structure comprises 432 residues: Glutamyl-tRNA reductase (432 aa).

Substrate-binding positions include 49 to 52 (TCNR), Ser-109, 114 to 116 (EGQ), and Gln-120. Cys-50 serves as the catalytic Nucleophile. 189–194 (GAGKMS) serves as a coordination point for NADP(+).

It belongs to the glutamyl-tRNA reductase family. As to quaternary structure, homodimer.

The enzyme catalyses (S)-4-amino-5-oxopentanoate + tRNA(Glu) + NADP(+) = L-glutamyl-tRNA(Glu) + NADPH + H(+). The protein operates within porphyrin-containing compound metabolism; protoporphyrin-IX biosynthesis; 5-aminolevulinate from L-glutamyl-tRNA(Glu): step 1/2. It functions in the pathway porphyrin-containing compound metabolism; chlorophyll biosynthesis. Catalyzes the NADPH-dependent reduction of glutamyl-tRNA(Glu) to glutamate 1-semialdehyde (GSA). This Cyanothece sp. (strain PCC 7425 / ATCC 29141) protein is Glutamyl-tRNA reductase.